Here is a 307-residue protein sequence, read N- to C-terminus: Nucleotide-binding protein Sca_0414 (307 aa).

19 to 26 (GMSGAGKS) serves as a coordination point for ATP. Residue 70 to 73 (DLRG) participates in GTP binding.

It belongs to the RapZ-like family.

Its function is as follows. Displays ATPase and GTPase activities. This chain is Nucleotide-binding protein Sca_0414, found in Staphylococcus carnosus (strain TM300).